We begin with the raw amino-acid sequence, 598 residues long: Integrator complex subunit 11 (598 aa).

Residues His-68, His-70, Asp-72, His-73, His-157, and Asp-178 each coordinate Zn(2+). Residues 68–73 (HFHLDH) carry the HXHXDH motif motif. The active site involves Glu-203. Position 414 (His-414) interacts with Zn(2+). Positions 470–480 (PLPDAKRPRTM) match the Nuclear localization signal motif.

The protein belongs to the metallo-beta-lactamase superfamily. RNA-metabolizing metallo-beta-lactamase-like family. INTS11 subfamily. Component of the Integrator complex, composed of core subunits INTS1, INTS2, INTS3, INTS4, INTS5, INTS6, INTS7, INTS8, INTS9/RC74, INTS10, INTS11/CPSF3L, INTS12, INTS13, INTS14 and INTS15. The core complex associates with protein phosphatase 2A subunits PPP2CA and PPP2R1A, to form the Integrator-PP2A (INTAC) complex. INTS11 is part of the RNA endonuclease subcomplex, composed of INTS4, INTS9, INTS11 and inositol hexakisphosphate (InsP6). The cofactor is Zn(2+).

It localises to the nucleus. The protein resides in the cytoplasm. Functionally, RNA endonuclease component of the integrator complex, a multiprotein complex that terminates RNA polymerase II (Pol II) transcription in the promoter-proximal region of genes. The integrator complex provides a quality checkpoint during transcription elongation by driving premature transcription termination of transcripts that are unfavorably configured for transcriptional elongation: the complex terminates transcription by (1) catalyzing dephosphorylation of the C-terminal domain (CTD) of Pol II subunit POLR2A/RPB1 and SUPT5H/SPT5, (2) degrading the exiting nascent RNA transcript via endonuclease activity and (3) promoting the release of Pol II from bound DNA. The integrator complex is also involved in terminating the synthesis of non-coding Pol II transcripts, such as enhancer RNAs (eRNAs), small nuclear RNAs (snRNAs), telomerase RNAs and long non-coding RNAs (lncRNAs). Within the integrator complex, INTS11 constitutes the RNA endonuclease subunit that degrades exiting nascent RNA transcripts. This Danio rerio (Zebrafish) protein is Integrator complex subunit 11 (cpsf3l).